Consider the following 142-residue polypeptide: Ribosome maturation factor RimP (142 aa).

This sequence belongs to the RimP family.

The protein localises to the cytoplasm. Its function is as follows. Required for maturation of 30S ribosomal subunits. This chain is Ribosome maturation factor RimP, found in Sulfurovum sp. (strain NBC37-1).